The sequence spans 239 residues: MISNNLEICSIDIGVHWYWNFLGLKIHGQVLLVSWVAIIILLLLAILGTFNMQKEPRGFQNFLEYVFEFLQDISKNQIEEKYYKSWVPFISTLFLFIFVSNWLGALVPWKLIKIPEGELAAPTNDINTTVALAMLTSVSYFYAGLSKKGLRYFLKYISPTPILLPINILEDFTKPLSLSFRLFGNIVADELVVAVFNLLFPLFLPLPVMVLGLFASSIQALIFATLSASYIGESLADHH.

The next 5 helical transmembrane spans lie at 30–50 (VLLV…LGTF), 87–107 (VPFI…GALV), 126–146 (INTT…AGLS), 191–211 (LVVA…VMVL), and 212–232 (GLFA…SYIG).

It belongs to the ATPase A chain family. F-type ATPases have 2 components, CF(1) - the catalytic core - and CF(0) - the membrane proton channel. CF(1) has five subunits: alpha(3), beta(3), gamma(1), delta(1), epsilon(1). CF(0) has four main subunits: a, b, b' and c.

It localises to the plastid. The protein resides in the chloroplast thylakoid membrane. Functionally, key component of the proton channel; it plays a direct role in the translocation of protons across the membrane. This chain is ATP synthase subunit a, chloroplastic, found in Cyanidium caldarium (Red alga).